The following is a 359-amino-acid chain: tRNA N6-adenosine threonylcarbamoyltransferase (359 aa).

Residues histidine 115 and histidine 119 each contribute to the Fe cation site. Substrate contacts are provided by residues 137 to 141 (LVSGG), aspartate 170, glycine 183, and asparagine 283. Aspartate 311 serves as a coordination point for Fe cation. The disordered stretch occupies residues 328–359 (APDSLDIAPRSRWPLDEKSAPVFGTGRRGAKA).

The protein belongs to the KAE1 / TsaD family. The cofactor is Fe(2+).

Its subcellular location is the cytoplasm. The catalysed reaction is L-threonylcarbamoyladenylate + adenosine(37) in tRNA = N(6)-L-threonylcarbamoyladenosine(37) in tRNA + AMP + H(+). Its function is as follows. Required for the formation of a threonylcarbamoyl group on adenosine at position 37 (t(6)A37) in tRNAs that read codons beginning with adenine. Is involved in the transfer of the threonylcarbamoyl moiety of threonylcarbamoyl-AMP (TC-AMP) to the N6 group of A37, together with TsaE and TsaB. TsaD likely plays a direct catalytic role in this reaction. The sequence is that of tRNA N6-adenosine threonylcarbamoyltransferase from Brucella suis (strain ATCC 23445 / NCTC 10510).